We begin with the raw amino-acid sequence, 347 residues long: Heat-inducible transcription repressor HrcA (347 aa).

This sequence belongs to the HrcA family.

Functionally, negative regulator of class I heat shock genes (grpE-dnaK-dnaJ and groELS operons). Prevents heat-shock induction of these operons. The protein is Heat-inducible transcription repressor HrcA of Lactiplantibacillus plantarum (strain ATCC BAA-793 / NCIMB 8826 / WCFS1) (Lactobacillus plantarum).